The following is a 254-amino-acid chain: Alcohol dehydrogenase (254 aa).

An NAD(+)-binding site is contributed by 9–32 (IFVAGLGGIGLDTSRELVKRDLKN). Position 138 (S138) interacts with substrate. Y151 serves as the catalytic Proton acceptor.

This sequence belongs to the short-chain dehydrogenases/reductases (SDR) family. As to quaternary structure, homodimer.

The enzyme catalyses a primary alcohol + NAD(+) = an aldehyde + NADH + H(+). It carries out the reaction a secondary alcohol + NAD(+) = a ketone + NADH + H(+). This is Alcohol dehydrogenase (Adh) from Drosophila paulistorum (Fruit fly).